Reading from the N-terminus, the 142-residue chain is Small ribosomal subunit protein uS12 (142 aa).

The protein belongs to the universal ribosomal protein uS12 family. Part of the 30S ribosomal subunit.

Functionally, with S4 and S5 plays an important role in translational accuracy. Located at the interface of the 30S and 50S subunits. The polypeptide is Small ribosomal subunit protein uS12 (Archaeoglobus fulgidus (strain ATCC 49558 / DSM 4304 / JCM 9628 / NBRC 100126 / VC-16)).